The chain runs to 235 residues: MEKLEMLYEGKAKQIYATDKADEVVIYYKDDATAFNGEKKGQITDKGVMNNKITSILFEQLEKQGIKTHFIKKLNDREQLCKKVEIVPLEVIVRNVAAGSMAKRLGLEEGTKLKTTVFEFSYKDDELGDPLINSYHAVAIGAATFEEIDTILEMTAKINNILKEAFAKENINLIDFKIEFGKCADGTIVLADEISPDTCRFWDATTGEKLDKDRFRRDLGNVEDAYIEILKRISK.

This sequence belongs to the SAICAR synthetase family.

It carries out the reaction 5-amino-1-(5-phospho-D-ribosyl)imidazole-4-carboxylate + L-aspartate + ATP = (2S)-2-[5-amino-1-(5-phospho-beta-D-ribosyl)imidazole-4-carboxamido]succinate + ADP + phosphate + 2 H(+). Its pathway is purine metabolism; IMP biosynthesis via de novo pathway; 5-amino-1-(5-phospho-D-ribosyl)imidazole-4-carboxamide from 5-amino-1-(5-phospho-D-ribosyl)imidazole-4-carboxylate: step 1/2. The chain is Phosphoribosylaminoimidazole-succinocarboxamide synthase from Clostridium botulinum (strain Alaska E43 / Type E3).